The chain runs to 439 residues: Ribosomal protein uS12 methylthiotransferase RimO (439 aa).

In terms of domain architecture, MTTase N-terminal spans 7 to 122 (QTIAVIALGC…LPDLVFGKNF (116 aa)). [4Fe-4S] cluster contacts are provided by Cys-16, Cys-52, Cys-85, Cys-155, Cys-159, and Cys-162. The region spanning 141–369 (SSTIPSAYLK…NAQYNIFQAK (229 aa)) is the Radical SAM core domain.

It belongs to the methylthiotransferase family. RimO subfamily. Requires [4Fe-4S] cluster as cofactor.

It localises to the cytoplasm. It catalyses the reaction L-aspartate(89)-[ribosomal protein uS12]-hydrogen + (sulfur carrier)-SH + AH2 + 2 S-adenosyl-L-methionine = 3-methylsulfanyl-L-aspartate(89)-[ribosomal protein uS12]-hydrogen + (sulfur carrier)-H + 5'-deoxyadenosine + L-methionine + A + S-adenosyl-L-homocysteine + 2 H(+). In terms of biological role, catalyzes the methylthiolation of an aspartic acid residue of ribosomal protein uS12. This Endomicrobium trichonymphae protein is Ribosomal protein uS12 methylthiotransferase RimO.